The following is a 119-amino-acid chain: Protein TusC (119 aa).

Belongs to the DsrF/TusC family. Heterohexamer, formed by a dimer of trimers. The hexameric TusBCD complex contains 2 copies each of TusB, TusC and TusD. The TusBCD complex interacts with TusE.

It localises to the cytoplasm. Part of a sulfur-relay system required for 2-thiolation of 5-methylaminomethyl-2-thiouridine (mnm(5)s(2)U) at tRNA wobble positions. The protein is Protein TusC of Buchnera aphidicola subsp. Acyrthosiphon pisum (strain 5A).